The primary structure comprises 299 residues: N-acetylmuramic acid 6-phosphate etherase (299 aa).

The region spanning 54-217 (TIAQYKKGGR…STITMVGVGK (164 aa)) is the SIS domain. E82 acts as the Proton donor in catalysis. E113 is a catalytic residue.

Belongs to the GCKR-like family. MurNAc-6-P etherase subfamily. As to quaternary structure, homodimer.

It carries out the reaction N-acetyl-D-muramate 6-phosphate + H2O = N-acetyl-D-glucosamine 6-phosphate + (R)-lactate. The protein operates within amino-sugar metabolism; N-acetylmuramate degradation. Functionally, specifically catalyzes the cleavage of the D-lactyl ether substituent of MurNAc 6-phosphate, producing GlcNAc 6-phosphate and D-lactate. This chain is N-acetylmuramic acid 6-phosphate etherase, found in Staphylococcus aureus (strain bovine RF122 / ET3-1).